An 800-amino-acid polypeptide reads, in one-letter code: Cation/H(+) antiporter 19 (800 aa).

The next 12 membrane-spanning stretches (helical) occupy residues 30-50 (FALP…RLLA), 60-77 (RVIA…SALG), 92-112 (LTVL…LVGL), 127-147 (LLIA…TSFV), 158-178 (QLPF…PVLA), 196-216 (MSAA…AIAL), 224-244 (LVSV…VVAI), 278-298 (FVTD…GIVA), 315-335 (LVSG…TDVT), 343-363 (WGLL…GTVG), 375-395 (AVTL…VLNI), and 408-428 (AILV…VMLI). The tract at residues 776–800 (ADTRPLVEEDAEYDQSSRDISDLTA) is disordered. Basic and acidic residues predominate over residues 790 to 800 (QSSRDISDLTA).

Belongs to the monovalent cation:proton antiporter 2 (CPA2) transporter (TC 2.A.37) family. CHX (TC 2.A.37.4) subfamily. As to expression, expressed in the whole plant but preferentially in pollen.

It localises to the membrane. Its function is as follows. May operate as a cation/H(+) antiporter. This chain is Cation/H(+) antiporter 19 (CHX19), found in Arabidopsis thaliana (Mouse-ear cress).